Here is a 243-residue protein sequence, read N- to C-terminus: Venom nerve growth factor 1 (243 aa).

Positions 1–18 (MSMLCYTLIIAFLIGIWA) are cleaved as a signal peptide. The propeptide occupies 19–125 (APKSEDNVPL…TLNRNIRAKR (107 aa)). The segment covering 47 to 66 (GLKTSRNTDQRHPAPKKAED) has biased composition (basic and acidic residues). The disordered stretch occupies residues 47–69 (GLKTSRNTDQRHPAPKKAEDQEL). 3 disulfide bridges follow: Cys-139/Cys-204, Cys-182/Cys-232, and Cys-192/Cys-234. Asn-148 is a glycosylation site (N-linked (GlcNAc...) asparagine).

It belongs to the NGF-beta family. As to quaternary structure, homodimer; non-covalently linked. As to expression, expressed by the venom gland.

It is found in the secreted. Functionally, nerve growth factor is important for the development and maintenance of the sympathetic and sensory nervous systems. It stimulates division and differentiation of sympathetic and embryonic sensory neurons as well as basal forebrain cholinergic neurons in the brain. Its relevance in the snake venom is not clear. However, it has been shown to inhibit metalloproteinase-dependent proteolysis of platelet glycoprotein Ib alpha, suggesting a metalloproteinase inhibition to prevent metalloprotease autodigestion and/or protection against prey proteases. Binds a lipid between the two protein chains in the homodimer. The lipid-bound form promotes histamine relase from mouse mast cells, contrary to the lipid-free form. This Pseudonaja textilis (Eastern brown snake) protein is Venom nerve growth factor 1.